The primary structure comprises 154 residues: NAD(P)H-quinone oxidoreductase subunit N (154 aa).

Belongs to the complex I NdhN subunit family. As to quaternary structure, NDH-1 can be composed of about 15 different subunits; different subcomplexes with different compositions have been identified which probably have different functions.

Its subcellular location is the cellular thylakoid membrane. It carries out the reaction a plastoquinone + NADH + (n+1) H(+)(in) = a plastoquinol + NAD(+) + n H(+)(out). It catalyses the reaction a plastoquinone + NADPH + (n+1) H(+)(in) = a plastoquinol + NADP(+) + n H(+)(out). In terms of biological role, NDH-1 shuttles electrons from an unknown electron donor, via FMN and iron-sulfur (Fe-S) centers, to quinones in the respiratory and/or the photosynthetic chain. The immediate electron acceptor for the enzyme in this species is believed to be plastoquinone. Couples the redox reaction to proton translocation, and thus conserves the redox energy in a proton gradient. Cyanobacterial NDH-1 also plays a role in inorganic carbon-concentration. This Prochlorococcus marinus (strain NATL2A) protein is NAD(P)H-quinone oxidoreductase subunit N.